Here is a 181-residue protein sequence, read N- to C-terminus: ATP-dependent protease subunit HslV (181 aa).

The active site involves T2. Residues G157, C160, and T163 each contribute to the Na(+) site.

This sequence belongs to the peptidase T1B family. HslV subfamily. In terms of assembly, a double ring-shaped homohexamer of HslV is capped on each side by a ring-shaped HslU homohexamer. The assembly of the HslU/HslV complex is dependent on binding of ATP.

The protein resides in the cytoplasm. The catalysed reaction is ATP-dependent cleavage of peptide bonds with broad specificity.. Allosterically activated by HslU binding. Protease subunit of a proteasome-like degradation complex believed to be a general protein degrading machinery. The chain is ATP-dependent protease subunit HslV from Hahella chejuensis (strain KCTC 2396).